The following is an 853-amino-acid chain: MSAIENFDAHTPMMQQYLKLKAQHPEILLFYRMGDFYELFYDDAKRASQLLDISLTKRGASAGEPIPMAGIPYHAVENYLAKLVNQGESVAICEQIGDPATSKGPVERKVVRIVTPGTISDEALLQERQDNLLAAIWQDSKGFGYATLDISSGRFRLSEPADRETMAAELQRTNPAELLYAEDFAEMSLIEGRRGLRRRPLWEFEIDTARQQLNLQFGTRDLVGFGVENAPRGLCAAGCLLQYAKDTQRTTLPHIRSITMEREQDSIIMDAATRRNLEITQNLAGGAENTLASVLDCTVTPMGSRMLKRWLHMPVRDTRVLLERQQTIGALQDFTAELQPVLRQVGDLERILARLALRTARPRDLARMRHAFQQLPELRALLENVDSAPVQALREKMGEFAELRDLLERAIIDTPPVLVRDGGVIAPGYNEELDEWRALADGATDYLERLEVRERERTGLDTLKVGFNAVHGYYIQISRGQSHLAPINYMRRQTLKNAERYIIPELKEYEDKVLTSKGKALALEKQLYEELFDLLLPHLEALQQSASALAELDVLVNLAERAYTLNYTCPTFIDKPGIRITEGRHPVVEQVLNEPFIANPLNLSPQRRMLIITGPNMGGKSTYMRQTALIALMAYIGSYVPAQKVEIGPIDRIFTRVGAADDLASGRSTFMVEMTETANILHNATEYSLVLMDEIGRGTSTYDGLSLAWACAENLANKIKALTLFATHYFELTQLPEKMEGVANVHLDALEHGDTIAFMHSVQDGAASKSYGLAVAALAGVPKEVIKRARQKLRELESISPNAAATQVDGTQMSLLSVPEETSPAVEALENLDPDSLTPRQALEWIYRLKSLV.

614–621 (GPNMGGKS) provides a ligand contact to ATP.

The protein belongs to the DNA mismatch repair MutS family.

In terms of biological role, this protein is involved in the repair of mismatches in DNA. It is possible that it carries out the mismatch recognition step. This protein has a weak ATPase activity. The chain is DNA mismatch repair protein MutS from Escherichia coli (strain SMS-3-5 / SECEC).